Consider the following 254-residue polypeptide: Vitamin B12 import ATP-binding protein BtuD (254 aa).

In terms of domain architecture, ABC transporter spans 1-239 (MHINHISVGN…ENLQQVFETP (239 aa)). 29-36 (GPNGSGKS) lines the ATP pocket.

It belongs to the ABC transporter superfamily. Vitamin B12 importer (TC 3.A.1.13.1) family. The complex is composed of two ATP-binding proteins (BtuD), two transmembrane proteins (BtuC) and a solute-binding protein (BtuF).

It is found in the cell inner membrane. It catalyses the reaction an R-cob(III)alamin(out) + ATP + H2O = an R-cob(III)alamin(in) + ADP + phosphate + H(+). In terms of biological role, part of the ABC transporter complex BtuCDF involved in vitamin B12 import. Responsible for energy coupling to the transport system. This is Vitamin B12 import ATP-binding protein BtuD from Vibrio vulnificus (strain YJ016).